A 188-amino-acid chain; its full sequence is Peptidyl-tRNA hydrolase (188 aa).

Y16 is a tRNA binding site. H21 acts as the Proton acceptor in catalysis. TRNA contacts are provided by F66, N68, and N114.

The protein belongs to the PTH family. As to quaternary structure, monomer.

It is found in the cytoplasm. The enzyme catalyses an N-acyl-L-alpha-aminoacyl-tRNA + H2O = an N-acyl-L-amino acid + a tRNA + H(+). Its function is as follows. Hydrolyzes ribosome-free peptidyl-tRNAs (with 1 or more amino acids incorporated), which drop off the ribosome during protein synthesis, or as a result of ribosome stalling. Functionally, catalyzes the release of premature peptidyl moieties from peptidyl-tRNA molecules trapped in stalled 50S ribosomal subunits, and thus maintains levels of free tRNAs and 50S ribosomes. The polypeptide is Peptidyl-tRNA hydrolase (Geobacter sp. (strain M21)).